The primary structure comprises 512 residues: Protein OS-9 homolog (512 aa).

The N-terminal stretch at 1–17 is a signal peptide; the sequence is MRRFNLILLASLQLVGA. The tract at residues 71 to 91 is disordered; it reads QAREADARDNEAENKDQDGPS. The span at 73 to 88 shows a compositional bias: basic and acidic residues; it reads READARDNEAENKDQD. N-linked (GlcNAc...) asparagine glycosylation occurs at Asn118. The MRH domain maps to 149-288; it reads DSCLYFMSGW…VVNTPRLCND (140 aa). Cys151 and Cys164 are joined by a disulfide. A mannooligosaccharide derivative is bound by residues Trp158, Trp159, Gln171, Asp242, Arg248, Glu270, and Tyr276. Cystine bridges form between Cys241–Cys274 and Cys256–Cys286. 2 disordered regions span residues 329 to 349 and 485 to 512; these read QVPL…PRDV and AAAK…KDEL. Positions 492–504 are enriched in acidic residues; the sequence is DDEEEVVEGSEEQ. The Prevents secretion from ER signature appears at 509–512; sequence KDEL.

It belongs to the OS-9 family. As to quaternary structure, interacts with missfolded ER lumenal proteins.

It localises to the endoplasmic reticulum membrane. Its function is as follows. Lectin involved in the quality control of the secretory pathway. As a member of the endoplasmic reticulum-associated degradation lumenal (ERAD-L) surveillance system, targets misfolded endoplasmic reticulum lumenal glycoproteins for degradation. The protein is Protein OS-9 homolog (YOS1) of Gibberella zeae (strain ATCC MYA-4620 / CBS 123657 / FGSC 9075 / NRRL 31084 / PH-1) (Wheat head blight fungus).